A 184-amino-acid chain; its full sequence is U3 small nucleolar ribonucleoprotein protein IMP3 (184 aa).

In terms of domain architecture, S4 RNA-binding spans 109-175 (RRLPTVLLKL…IKRHVLEYNE (67 aa)).

This sequence belongs to the universal ribosomal protein uS4 family. As to quaternary structure, part of the small subunit (SSU) processome, composed of more than 70 proteins and the RNA chaperone small nucleolar RNA (snoRNA) U3. Component of a heterotrimeric complex containing IMP3, IMP4 and MPHOSPH10. Interacts with MPHOSPH10.

Its subcellular location is the nucleus. It is found in the nucleolus. Functionally, component of the 60-80S U3 small nucleolar ribonucleoprotein (U3 snoRNP). Required for the early cleavages during pre-18S ribosomal RNA processing. Part of the small subunit (SSU) processome, first precursor of the small eukaryotic ribosomal subunit. During the assembly of the SSU processome in the nucleolus, many ribosome biogenesis factors, an RNA chaperone and ribosomal proteins associate with the nascent pre-rRNA and work in concert to generate RNA folding, modifications, rearrangements and cleavage as well as targeted degradation of pre-ribosomal RNA by the RNA exosome. This is U3 small nucleolar ribonucleoprotein protein IMP3 from Homo sapiens (Human).